Consider the following 511-residue polypeptide: MEKFEGYSEKHKSRQQYFVYPLLFQEYIYAFAHDYGLNGSEPVEIVSCNNKKFSSLLVKRLIIRMYQQNFWDKSVNHPNQDRLLDYKNYFYSEFYSQILSEGFAIVVEIPFSLRELSCPKEKEIPKFQNLRSIHSIFPFLEDKFLHLDYLSHIEIPYPIHLEILVQLLQYRIQDVPSLHLLRFFLNYYSNWNSFITSMKSIFLFKKENKRLFRFLYNSYVSEYEFFLLFLRKQSSCLPLASSGTFLERIHFSRKMEHFGIMYPGFSRKTLWFFMDPLMHYVRYQGKAILASKGTFFLKKKWKCYLINFWQYYFCFWTQPRRIHINQLANSCFDFLGYLSSVPKSPLLVRNQMLENSFLIDTRMKKFDTIVPATPLIGYLSKAEFCTGSGHPISKPIWTDLSDWDILDRFGRICRNLFHYHSGSSKKRTLYRLKYILRLSCARTLARKHKSTVRTFMQRLGSAFLEEFFTEEEQVFSLMFTKTTLFSFCGSHTERIWYLDIIRINDLVNPLN.

Belongs to the intron maturase 2 family. MatK subfamily.

The protein resides in the plastid. Its subcellular location is the chloroplast. Functionally, usually encoded in the trnK tRNA gene intron. Probably assists in splicing its own and other chloroplast group II introns. This chain is Maturase K, found in Psathyrostachys juncea (Russian wildrye).